Here is a 665-residue protein sequence, read N- to C-terminus: Golgi-associated RAB2B interactor protein 3 (665 aa).

Disordered stretches follow at residues 211 to 240 (EIRG…AGGE), 272 to 296 (AAAG…GTAG), and 480 to 590 (SEGY…GSVS). Positions 219–232 (NSRPQSSPTVSEAT) are enriched in polar residues. Residues 499–513 (EAKEKRERREKDRTS) show a composition bias toward basic and acidic residues. Composition is skewed to basic residues over residues 514 to 538 (SRKS…RKTS) and 554 to 566 (GHGR…HSSS). The short motif at 515–531 (RKSSHHRRTGMSRHSSK) is the Bipartite nuclear localization signal element. The residue at position 652 (Ser652) is a Phosphoserine.

It belongs to the GARIN family. As to quaternary structure, interacts (via N-terminus) with RAB2B (in GTP-bound form). Interacts with FRG1. In terms of tissue distribution, expressed in adult spermatocytes and spermatids.

Its subcellular location is the golgi apparatus. It is found in the nucleus. It localises to the cajal body. Functionally, may be involved in RNA biogenesis. In Mus musculus (Mouse), this protein is Golgi-associated RAB2B interactor protein 3.